A 67-amino-acid chain; its full sequence is Medusin-H1 (67 aa).

The N-terminal stretch at 1–22 (MDFLKKSLFLVLFLGFFSLSIC) is a signal peptide. The propeptide occupies 23–48 (EEEKRETEEKENEQEDDREERREEKR). The disordered stretch occupies residues 24 to 46 (EEKRETEEKENEQEDDREERREE). Residues 31–40 (EKENEQEDDR) show a composition bias toward acidic residues. At Leu-66 the chain carries Leucine amide.

This sequence belongs to the frog skin active peptide (FSAP) family. Medusin subfamily. As to expression, expressed by the skin glands.

The protein resides in the secreted. Antimicrobial peptide with activity against Gram-positive bacteria (S.aureus, MIC=32 mg/L) and fungi (C.albicans, MIC=128 mg/L). Shows weak hemolytic activity. The chain is Medusin-H1 from Pithecopus hypochondrialis (Orange-legged leaf frog).